The primary structure comprises 320 residues: Cytochrome f (320 aa).

An N-terminal signal peptide occupies residues 1-35 (MQNRNTFSWVKEEMTRFISVSIMIYVITRTSISNA). The heme site is built by Tyr-36, Cys-56, Cys-59, and His-60. A helical transmembrane segment spans residues 286 to 306 (VQGLLFFLASVILAQIFLVLK).

Belongs to the cytochrome f family. In terms of assembly, the 4 large subunits of the cytochrome b6-f complex are cytochrome b6, subunit IV (17 kDa polypeptide, petD), cytochrome f and the Rieske protein, while the 4 small subunits are PetG, PetL, PetM and PetN. The complex functions as a dimer. Heme serves as cofactor.

Its subcellular location is the plastid. The protein resides in the chloroplast thylakoid membrane. Its function is as follows. Component of the cytochrome b6-f complex, which mediates electron transfer between photosystem II (PSII) and photosystem I (PSI), cyclic electron flow around PSI, and state transitions. This chain is Cytochrome f, found in Calycanthus floridus var. glaucus (Eastern sweetshrub).